The primary structure comprises 407 residues: Chorismate synthase (407 aa).

Residues arginine 43 and arginine 49 each contribute to the NADP(+) site. FMN-binding positions include 143–145, 264–265, glycine 308, 323–327, and arginine 349; these read RSS, QA, and KPIST.

Belongs to the chorismate synthase family. As to quaternary structure, homotetramer. The cofactor is FMNH2.

It catalyses the reaction 5-O-(1-carboxyvinyl)-3-phosphoshikimate = chorismate + phosphate. The protein operates within metabolic intermediate biosynthesis; chorismate biosynthesis; chorismate from D-erythrose 4-phosphate and phosphoenolpyruvate: step 7/7. Its function is as follows. Catalyzes the anti-1,4-elimination of the C-3 phosphate and the C-6 proR hydrogen from 5-enolpyruvylshikimate-3-phosphate (EPSP) to yield chorismate, which is the branch point compound that serves as the starting substrate for the three terminal pathways of aromatic amino acid biosynthesis. This reaction introduces a second double bond into the aromatic ring system. This is Chorismate synthase from Corynebacterium efficiens (strain DSM 44549 / YS-314 / AJ 12310 / JCM 11189 / NBRC 100395).